Reading from the N-terminus, the 101-residue chain is Urease subunit beta (101 aa).

Belongs to the urease beta subunit family. In terms of assembly, heterotrimer of UreA (gamma), UreB (beta) and UreC (alpha) subunits. Three heterotrimers associate to form the active enzyme.

The protein resides in the cytoplasm. The enzyme catalyses urea + 2 H2O + H(+) = hydrogencarbonate + 2 NH4(+). Its pathway is nitrogen metabolism; urea degradation; CO(2) and NH(3) from urea (urease route): step 1/1. The polypeptide is Urease subunit beta (Cupriavidus pinatubonensis (strain JMP 134 / LMG 1197) (Cupriavidus necator (strain JMP 134))).